A 530-amino-acid chain; its full sequence is Autoinducer-2 kinase (530 aa).

Belongs to the FGGY kinase family.

It localises to the cytoplasm. It carries out the reaction (S)-4,5-dihydroxypentane-2,3-dione + ATP = (2S)-2-hydroxy-3,4-dioxopentyl phosphate + ADP + H(+). Catalyzes the phosphorylation of autoinducer-2 (AI-2) to phospho-AI-2, which subsequently inactivates the transcriptional regulator LsrR and leads to the transcription of the lsr operon. Phosphorylates the ring-open form of (S)-4,5-dihydroxypentane-2,3-dione (DPD), which is the precursor to all AI-2 signaling molecules, at the C5 position. This is Autoinducer-2 kinase from Enterobacter sp. (strain 638).